A 478-amino-acid polypeptide reads, in one-letter code: Solute carrier family 7 member 13 (478 aa).

Over 1–14 the chain is Cytoplasmic; the sequence is MAMDSKKEIRLKRE. The chain crosses the membrane as a helical span at residues 15 to 35; it reads LGYFWGTNFLIINIIGAGIFV. Residues 36-47 lie on the Extracellular side of the membrane; that stretch reads SPKGVLQHSSMN. The helical transmembrane segment at 48 to 68 threads the bilayer; it reads VGVSLCVWAVCAVLTLTSALC. The Cytoplasmic segment spans residues 69 to 89; it reads SAEIGITFPYSGAHYYFLKRC. A helical membrane pass occupies residues 90–110; it reads FGPLVAFLRLWTSLFLGPGLI. Over 111–129 the chain is Extracellular; the sequence is ASQALLLAEYGVQPFYPSC. The chain crosses the membrane as a helical span at residues 130 to 150; sequence SAPILPRKCLALAMLWIVGIL. The Cytoplasmic segment spans residues 151-163; sequence NSRGVKELSWLQT. Residues 164 to 184 traverse the membrane as a helical segment; sequence VSSVLKVGILGVISLSGLFLL. Residues 185–208 lie on the Extracellular side of the membrane; it reads VRGKKENVQRLQNAFDAEFPEVSQ. A helical transmembrane segment spans residues 209-229; that stretch reads LIEAIFQGYFAFSGGGCFTCI. Residues 230–242 are Cytoplasmic-facing; the sequence is AGELKKPSKTIPR. A helical transmembrane segment spans residues 243 to 263; sequence CIFTGLPLVTVVYLLANISYL. Over 264-288 the chain is Extracellular; that stretch reads TVLTPQEMLSSDAVALTWTDRVIPQ. The helical transmembrane segment at 289 to 309 threads the bilayer; it reads FTWTVPFAISASLFINLVINV. At 310 to 338 the chain is on the cytoplasmic side; sequence LETSRVLYIASENGQLPLLFCALNVHSSP. A helical membrane pass occupies residues 339-359; the sequence is FIAVLLIISMASILIVLTNLI. A topological domain (extracellular) is located at residue aspartate 360. A helical membrane pass occupies residues 361–381; it reads LINYLYFVVSIWTALSIIGIL. Residues 382–395 lie on the Cytoplasmic side of the membrane; the sequence is KLRYQEPNLHRPYK. Residues 396–416 form a helical membrane-spanning segment; the sequence is VFLPFTFIALGITLSLVLIPL. The Extracellular portion of the chain corresponds to 417 to 423; sequence VKSPKLH. A helical membrane pass occupies residues 424 to 444; sequence YIYVFLFLLSGLVFYVPLIHF. Residues 445–478 are Cytoplasmic-facing; sequence KVKFVWFQKLTCYLQLLFNICIPDVSDDHIHEES.

Belongs to the amino acid-polyamine-organocation (APC) superfamily. In terms of assembly, disulfide-linked heterodimer composed of the catalytic light subunit SLC7A13 and the heavy subunit SLC3A1. In terms of tissue distribution, expressed in renal tubules in the outer stripe of the outer medulla and medullary ray (at protein level). Detected in male but not in female kidney.

The protein resides in the apical cell membrane. The catalysed reaction is L-cystine(out) + L-aspartate(in) = L-cystine(in) + L-aspartate(out). The enzyme catalyses L-cystine(out) = L-cystine(in). It carries out the reaction L-aspartate(in) + L-glutamate(out) = L-aspartate(out) + L-glutamate(in). It catalyses the reaction L-aspartate(in) + L-glutamine(out) = L-aspartate(out) + L-glutamine(in). The catalysed reaction is L-aspartate(in) + L-methionine(out) = L-aspartate(out) + L-methionine(in). The enzyme catalyses L-leucine(out) + L-aspartate(in) = L-leucine(in) + L-aspartate(out). It carries out the reaction L-valine(out) + L-aspartate(in) = L-valine(in) + L-aspartate(out). It catalyses the reaction L-aspartate(in) + L-phenylalanine(out) = L-aspartate(out) + L-phenylalanine(in). The catalysed reaction is L-tyrosine(out) + L-aspartate(in) = L-tyrosine(in) + L-aspartate(out). The enzyme catalyses L-tryptophan(out) + L-aspartate(in) = L-tryptophan(in) + L-aspartate(out). In terms of biological role, associates with SLC3A1/rBAT to form a functional heterodimeric complex that transports anionic and neutral amino acids across the apical plasma membrane of renal epithelium. Preferentially mediates exchange transport, but can also operate via facilitated diffusion. May act as a major transporter for L-cystine in late proximal tubules, ensuring its reabsorption from the luminal fluid in exchange for cytosolic L-glutamate or L-aspartate. The polypeptide is Solute carrier family 7 member 13 (Mus musculus (Mouse)).